A 478-amino-acid polypeptide reads, in one-letter code: Ribosomal RNA small subunit methyltransferase F (478 aa).

Residues 126–132, Glu-150, Asp-177, and Asp-195 each bind S-adenosyl-L-methionine; that span reads AAAPGSK. Catalysis depends on Cys-248, which acts as the Nucleophile.

Belongs to the class I-like SAM-binding methyltransferase superfamily. RsmB/NOP family.

It is found in the cytoplasm. The catalysed reaction is cytidine(1407) in 16S rRNA + S-adenosyl-L-methionine = 5-methylcytidine(1407) in 16S rRNA + S-adenosyl-L-homocysteine + H(+). In terms of biological role, specifically methylates the cytosine at position 1407 (m5C1407) of 16S rRNA. The sequence is that of Ribosomal RNA small subunit methyltransferase F from Erwinia tasmaniensis (strain DSM 17950 / CFBP 7177 / CIP 109463 / NCPPB 4357 / Et1/99).